Consider the following 948-residue polypeptide: UvrABC system protein A (948 aa).

Position 33–40 (33–40) interacts with ATP; it reads GLSGSGKS. The C4-type zinc-finger motif lies at 252–279; sequence CPICGFSIGELEPRMFSFNSPFGACPTC. ABC transporter domains lie at 309-587 and 607-935; these read WIPT…KKSL and ASDR…KYLK. 639–646 provides a ligand contact to ATP; sequence GVSGSGKS. The C4-type zinc-finger motif lies at 738-764; sequence CEACKGDGIIKIEMHFLPDVYVPCEVC.

Belongs to the ABC transporter superfamily. UvrA family. As to quaternary structure, forms a heterotetramer with UvrB during the search for lesions.

It localises to the cytoplasm. Functionally, the UvrABC repair system catalyzes the recognition and processing of DNA lesions. UvrA is an ATPase and a DNA-binding protein. A damage recognition complex composed of 2 UvrA and 2 UvrB subunits scans DNA for abnormalities. When the presence of a lesion has been verified by UvrB, the UvrA molecules dissociate. The protein is UvrABC system protein A of Staphylococcus aureus (strain N315).